Reading from the N-terminus, the 624-residue chain is Chaperone protein HtpG (624 aa).

The segment at 1–336 (MKGQETRGFQ…SNDLPLNVSR (336 aa)) is a; substrate-binding. A b region spans residues 337–552 (EILQDSTVTR…ADEMSTQMAK (216 aa)). Residues 553–624 (LFAAAGQSVP…IRRMNQLLVS (72 aa)) form a c region.

It belongs to the heat shock protein 90 family. As to quaternary structure, homodimer. UMPylated on a histidine residue by YdiU under ATP-limited conditions.

Its subcellular location is the cytoplasm. Its activity is regulated as follows. UMPylation of the chaperone by YdiU negatively regulates its activity, facilitating Salmonella survival under ATP-limited conditions. In terms of biological role, molecular chaperone. Has ATPase activity. This is Chaperone protein HtpG from Salmonella typhimurium (strain LT2 / SGSC1412 / ATCC 700720).